Here is a 291-residue protein sequence, read N- to C-terminus: Ribosomal RNA small subunit methyltransferase H (291 aa).

Residues 36-38 (GGH), Asp-55, Ala-90, Asp-102, and Gln-109 contribute to the S-adenosyl-L-methionine site.

Belongs to the methyltransferase superfamily. RsmH family.

It localises to the cytoplasm. It catalyses the reaction cytidine(1402) in 16S rRNA + S-adenosyl-L-methionine = N(4)-methylcytidine(1402) in 16S rRNA + S-adenosyl-L-homocysteine + H(+). Specifically methylates the N4 position of cytidine in position 1402 (C1402) of 16S rRNA. This Thermosipho africanus (strain TCF52B) protein is Ribosomal RNA small subunit methyltransferase H.